Here is a 704-residue protein sequence, read N- to C-terminus: Elongation factor G 1 (704 aa).

The tr-type G domain occupies 8–291 (ERYRNIGISA…AVIDYLPSPA (284 aa)). Residues 17 to 24 (AHIDAGKT), 88 to 92 (DTPGH), and 142 to 145 (NKMD) contribute to the GTP site.

The protein belongs to the TRAFAC class translation factor GTPase superfamily. Classic translation factor GTPase family. EF-G/EF-2 subfamily.

Its subcellular location is the cytoplasm. Functionally, catalyzes the GTP-dependent ribosomal translocation step during translation elongation. During this step, the ribosome changes from the pre-translocational (PRE) to the post-translocational (POST) state as the newly formed A-site-bound peptidyl-tRNA and P-site-bound deacylated tRNA move to the P and E sites, respectively. Catalyzes the coordinated movement of the two tRNA molecules, the mRNA and conformational changes in the ribosome. This chain is Elongation factor G 1, found in Burkholderia thailandensis (strain ATCC 700388 / DSM 13276 / CCUG 48851 / CIP 106301 / E264).